The primary structure comprises 1099 residues: MCGIIGYIGNDKAPKILLNGLRRLEYRGYDSCGIGVVDNNKLIIKKNVGKVEEVAKKERFLDIDGNIGIGHCLHPDTYVILPDGRMKKISEIDEDEVLSVNFEDLKLYNKKIKKFKHKAPKILYKIKTAFSELITTGEHKLFVVENGKIVEKCVKDLNGSELIGVVRKLNYSFNDNVEFKDVYVERHYKLDETIRNKLRKVREKLGLTRKDVEKLCGVKEIYIVKIETGKLESIEEERLKKLCSLYGINFEEIIYRDNLHYTNPVKFPKTPTPELMQIIGYIIGDGHFPSNRMLRLKDERKEVLEEYNQLFKTVFNLEGNIKKGDGNYYILEINSKYLIDWFRENIPELFNKTGNERTPEFVFRLNNDLVASYLRGIFDAEGYIRAEAKQIGIGMTSKCFIKEIQFLLLRFGILASYSKIKRKEENWNNTHKLLISDKKSFELFKKYIGFTAKDKMEKLEAILNKMKGLNFRYISIPLTKKEIREFVGVPLKTIKNGDNYCTDYTIEKIIEELNSKGLYDKAEYLKRFLDADIVWTKFKIEEVESDVEYVYDLEVEDYHNFIGNLIINHNSRWATHGNVCKENAHPHTDCKEEIAVVHNGIISNYKELKDELMKKGHKFKSETDTEVVPHLIEEELKKFKEINEENYIKAVKNAIKKLKGTYALVIINKNFPNLLIGARNESPLILGINDDGYFLGSDITAFLDYTNKAIPLEDGDVVVIKKKENGYEVTIENNGNTVEREMMEINWDISSAEKMGYPHFMLKEIMEQPEVLKVSAKISAEEIKELAKCIKDYDRVYFVAMGTSLHAAMVVEYLFAKLGKLVIACDASEFLNKGVVDDKTLVIGITQSGETYDTLKALRFAKKNKAKTGAIVNVLGSTATREADITVMMGAGIEIAVCATKTYTSQLMILYRLFIEYGKLLGRDMSEYEKEIDKIPNYIKEVLDKKETIKEIANNLKVNNYIFISKGINIASALEGALKFKEITYLHAEGMSGGLLKHGTISLIDENMDTVAIVPPRDSAVFNSILSNIEEVKARGGKVIAITPTEIDGAENILVPEVIEEISPIVYAPAFQLLAYYKAVELGRDVDKPRGLAKSVTVE.

The Nucleophile; for GATase activity role is filled by cysteine 2. The Glutamine amidotransferase type-2; first part domain occupies 2–71; that stretch reads CGIIGYIGND…DIDGNIGIGH (70 aa). Positions 198 to 253 constitute an HTH cro/C1-type domain; sequence LRKVREKLGLTRKDVEKLCGVKEIYIVKIETGKLESIEEERLKKLCSLYGINFEEI. The DOD-type homing endonuclease domain occupies 278-413; the sequence is IIGYIIGDGH…IQFLLLRFGI (136 aa). The Glutamine amidotransferase type-2; second part domain maps to 571–723; the sequence is SRWATHGNVC…DGDVVVIKKK (153 aa). SIS domains are found at residues 786–923 and 948–1089; these read LAKC…LLGR and TIKE…VDKP. Lysine 1094 serves as the catalytic For Fru-6P isomerization activity.

The protein in the C-terminal section; belongs to the SIS family. GFAT subfamily. Homodimer. Post-translationally, this protein undergoes a protein self splicing that involves a post-translational excision of the intervening region (intein) followed by peptide ligation.

The protein localises to the cytoplasm. The catalysed reaction is D-fructose 6-phosphate + L-glutamine = D-glucosamine 6-phosphate + L-glutamate. Functionally, catalyzes the first step in hexosamine metabolism, converting fructose-6P into glucosamine-6P using glutamine as a nitrogen source. The chain is Glutamine--fructose-6-phosphate aminotransferase [isomerizing] (glmS) from Methanocaldococcus jannaschii (strain ATCC 43067 / DSM 2661 / JAL-1 / JCM 10045 / NBRC 100440) (Methanococcus jannaschii).